The following is a 436-amino-acid chain: Tubulin epsilon and delta complex protein 2 (436 aa).

Disordered stretches follow at residues 53 to 76 (ARTPSPVPETKEEDPSPACAPSSQ) and 94 to 191 (VRKG…PSSA). Low complexity predominate over residues 111–131 (TSKAATSGAAAASHPRAPSRG). Positions 153-170 (DYPEHRLRSKGDKTHVRT) are enriched in basic and acidic residues. At Ser161 the chain carries Phosphoserine.

In terms of assembly, interacts with TEDC1. Found in a complex with TEDC1, TEDC2, TUBE1 and TUBD1.

The protein localises to the cell projection. Its subcellular location is the cilium. It localises to the cytoplasm. The protein resides in the cytoskeleton. It is found in the microtubule organizing center. The protein localises to the centrosome. Its subcellular location is the centriole. Its function is as follows. Acts as a positive regulator of ciliary hedgehog signaling. Required for centriole stability. This Mus musculus (Mouse) protein is Tubulin epsilon and delta complex protein 2.